A 37-amino-acid chain; its full sequence is Cytochrome b6-f complex subunit 7 (37 aa).

A helical transmembrane segment spans residues Ala11–Leu29.

It belongs to the PetM family. In terms of assembly, the 4 large subunits of the cytochrome b6-f complex are cytochrome b6, subunit IV (17 kDa polypeptide, PetD), cytochrome f and the Rieske protein, while the 4 small subunits are PetG, PetL, PetM and PetN. The complex functions as a dimer.

The protein localises to the cellular thylakoid membrane. Functionally, component of the cytochrome b6-f complex, which mediates electron transfer between photosystem II (PSII) and photosystem I (PSI), cyclic electron flow around PSI, and state transitions. This chain is Cytochrome b6-f complex subunit 7, found in Crocosphaera subtropica (strain ATCC 51142 / BH68) (Cyanothece sp. (strain ATCC 51142)).